A 508-amino-acid polypeptide reads, in one-letter code: Aldehyde dehydrogenase family 7 member A1 (508 aa).

244–249 (GSSKVG) provides a ligand contact to NAD(+). Glu-266 serves as the catalytic Proton acceptor. Catalysis depends on Cys-300, which acts as the Nucleophile.

Belongs to the aldehyde dehydrogenase family. In terms of assembly, homotetramer.

The enzyme catalyses an aldehyde + NAD(+) + H2O = a carboxylate + NADH + 2 H(+). In Pisum sativum (Garden pea), this protein is Aldehyde dehydrogenase family 7 member A1.